The primary structure comprises 289 residues: Aquaporin PIP2-3 (289 aa).

A disordered region spans residues 1–25; that stretch reads MAKQDIEASGPEAGEFSAKDYTDPP. The next 2 membrane-spanning stretches (helical) occupy residues 43 to 63 and 80 to 100; these read AVIA…ATVI and CGGV…FILV. The NPA 1 signature appears at 112–114; it reads NPA. A run of 3 helical transmembrane segments spans residues 131–151, 173–193, and 207–227; these read LLYI…VKGF, GTGL…VFSA, and VLAP…TIPI. The short motif at 233–235 is the NPA 2 element; it reads NPA. The helical transmembrane segment at 255–275 threads the bilayer; that stretch reads IFWVGPLIGAAIAAAYHQYVL.

Belongs to the MIP/aquaporin (TC 1.A.8) family. PIP (TC 1.A.8.11) subfamily.

The protein localises to the cell membrane. Aquaporins facilitate the transport of water and small neutral solutes across cell membranes. This chain is Aquaporin PIP2-3 (PIP2-3), found in Zea mays (Maize).